Consider the following 118-residue polypeptide: uncharacterized protein (118 aa).

Its subcellular location is the mitochondrion. This is an uncharacterized protein from Arabidopsis thaliana (Mouse-ear cress).